The following is a 428-amino-acid chain: C4-dicarboxylate transport protein (428 aa).

A run of 8 helical transmembrane segments spans residues 8 to 28, 44 to 64, 76 to 96, 142 to 162, 184 to 204, 222 to 242, 326 to 346, and 352 to 372; these read SLYFQVLTAIAIGILLGHFYP, LIKMIIAPVIFCTVVTGIAGM, VALLYFEVVSTIALIIGLIIV, IGAFASGNILQVLLFAVLFGF, VIFGIINMIMRLAPIGAFGAM, LIICFYITCILFVVVVLGSIA, IFHQITLLVVLLLSSKGAAGV, and IVLAATISAVGHLPIAGLALI.

It belongs to the dicarboxylate/amino acid:cation symporter (DAACS) (TC 2.A.23) family.

It is found in the cell inner membrane. In terms of biological role, responsible for the transport of dicarboxylates such as succinate, fumarate, and malate from the periplasm across the membrane. This Enterobacter sp. (strain 638) protein is C4-dicarboxylate transport protein.